The primary structure comprises 356 residues: Glucan endo-1,3-beta-glucosidase, acidic isoform GL153 (356 aa).

An N-terminal signal peptide occupies residues 1 to 29; that stretch reads MALCIKNGFLAAALVLVGLLMCSIQMIGA. Glutamine 30 is modified (pyrrolidone carboxylic acid). Asparagine 95 is a glycosylation site (N-linked (GlcNAc...) asparagine). The Proton donor role is filled by glutamate 124. Glutamate 264 (nucleophile) is an active-site residue.

This sequence belongs to the glycosyl hydrolase 17 family. As to expression, is expressed primarily in epidermal cell of healthy plant, and following induction by ethylene, accumulates in mesophyll cells.

The protein localises to the secreted. Its subcellular location is the extracellular space. It catalyses the reaction Hydrolysis of (1-&gt;3)-beta-D-glucosidic linkages in (1-&gt;3)-beta-D-glucans.. Its function is as follows. Is thought to be an important plant defense-related product against fungal pathogens. This is Glucan endo-1,3-beta-glucosidase, acidic isoform GL153 (GGL4) from Nicotiana tabacum (Common tobacco).